A 377-amino-acid polypeptide reads, in one-letter code: Opsin-2 (377 aa).

The Extracellular segment spans residues 1-57 (MNNQSENYYHGAQFEALKSAGAIEMLGDGLTGDDLAAIPEHWLSYPAPPASAHTALA). N-linked (GlcNAc...) asparagine glycosylation is present at N3. The chain crosses the membrane as a helical span at residues 58–78 (LLYIFFTFAALVGNGMVIFIF). Residues 79–89 (STTKSLRTSSN) are Cytoplasmic-facing. A helical transmembrane segment spans residues 90-110 (FLVLNLAILDFIMMAKAPIFI). Residues 111–126 (YNSAMRGFAVGTVGCQ) lie on the Extracellular side of the membrane. A disulfide bond links C125 and C202. Residues 127–146 (IFALMGAYSGIGAGMTNACI) form a helical membrane-spanning segment. At 147–166 (AYDRHSTITRPLDGRLSEGK) the chain is on the cytoplasmic side. The helical transmembrane segment at 167–187 (VLLMVAFVWIYSTPWALLPLL) threads the bilayer. The Extracellular portion of the chain corresponds to 188-214 (KIWGRYVPEGYLTSCSFDYLTNTFDTK). Residues 215–235 (LFVACIFTCSYVFPMSLIIYF) traverse the membrane as a helical segment. The Cytoplasmic portion of the chain corresponds to 236–283 (YSGIVKQVFAHEAALREQAKKMNVESLRANQGGSSESAEIRIAKAALT). A helical membrane pass occupies residues 284–304 (VCFLFVASWTPYGVMALIGAF). The Extracellular segment spans residues 305-314 (GNQQLLTPGV). A helical transmembrane segment spans residues 315–335 (TMIPAVACKAVACISPWVYAI). Residues 336-377 (RHPMYRQELQRRMPWLQIDEPDDTVSTATSNTTNSAPPAATA) lie on the Cytoplasmic side of the membrane. Positions 355-377 (EPDDTVSTATSNTTNSAPPAATA) are disordered. A compositionally biased stretch (low complexity) spans 361-377 (STATSNTTNSAPPAATA).

The protein belongs to the G-protein coupled receptor 1 family. Opsin subfamily. In terms of tissue distribution, in the retina, expression is essentially uniformly distributed, but a higher level is seen in the dorsal region of the retina and in the dorsal rim retinulae.

Its subcellular location is the membrane. In terms of biological role, visual pigments are the light-absorbing molecules that mediate vision. They consist of an apoprotein, opsin, covalently linked to cis-retinal. May play a role in photoperiodic photoreception. This is Opsin-2 (OP2) from Manduca sexta (Tobacco hawkmoth).